Reading from the N-terminus, the 426-residue chain is Glutamate-1-semialdehyde 2,1-aminomutase (426 aa).

Lys-265 carries the post-translational modification N6-(pyridoxal phosphate)lysine.

It belongs to the class-III pyridoxal-phosphate-dependent aminotransferase family. HemL subfamily. Homodimer. Pyridoxal 5'-phosphate is required as a cofactor.

It is found in the cytoplasm. It carries out the reaction (S)-4-amino-5-oxopentanoate = 5-aminolevulinate. It participates in porphyrin-containing compound metabolism; protoporphyrin-IX biosynthesis; 5-aminolevulinate from L-glutamyl-tRNA(Glu): step 2/2. The polypeptide is Glutamate-1-semialdehyde 2,1-aminomutase (Salmonella typhi).